The sequence spans 207 residues: Protein GrpE (207 aa).

Over residues 1-11 the composition is skewed to basic and acidic residues; sequence MTETDGQKDNN. The disordered stretch occupies residues 1 to 40; it reads MTETDGQKDNNQDTAQAAADPVVSKPYIMPDDPEEGSNEA.

It belongs to the GrpE family. As to quaternary structure, homodimer.

Its subcellular location is the cytoplasm. Functionally, participates actively in the response to hyperosmotic and heat shock by preventing the aggregation of stress-denatured proteins, in association with DnaK and GrpE. It is the nucleotide exchange factor for DnaK and may function as a thermosensor. Unfolded proteins bind initially to DnaJ; upon interaction with the DnaJ-bound protein, DnaK hydrolyzes its bound ATP, resulting in the formation of a stable complex. GrpE releases ADP from DnaK; ATP binding to DnaK triggers the release of the substrate protein, thus completing the reaction cycle. Several rounds of ATP-dependent interactions between DnaJ, DnaK and GrpE are required for fully efficient folding. The polypeptide is Protein GrpE (Rhodopseudomonas palustris (strain ATCC BAA-98 / CGA009)).